A 667-amino-acid chain; its full sequence is Long-chain-fatty-acid--CoA ligase ACSBG2 (667 aa).

Residues 227-235, 418-423, aspartate 496, arginine 511, and arginine 624 each bind ATP; these read TSGTTGTPK and EIYGMS.

This sequence belongs to the ATP-dependent AMP-binding enzyme family. Bubblegum subfamily. In terms of tissue distribution, testis- and brainstem-specific. Expressed in pubertal and adult testis. Enriched in germ cells and Sertoli cells while present at a lower level in Leydig cells. Present in testicular Sertoli cells and large motoneurons in the medulla oblongata and cervical spinal cord (at protein level).

It localises to the cytoplasm. Its subcellular location is the membrane. It carries out the reaction a long-chain fatty acid + ATP + CoA = a long-chain fatty acyl-CoA + AMP + diphosphate. It catalyses the reaction (5Z,8Z,11Z,14Z)-eicosatetraenoate + ATP + CoA = (5Z,8Z,11Z,14Z)-eicosatetraenoyl-CoA + AMP + diphosphate. The enzyme catalyses hexadecanoate + ATP + CoA = hexadecanoyl-CoA + AMP + diphosphate. The catalysed reaction is (9Z)-octadecenoate + ATP + CoA = (9Z)-octadecenoyl-CoA + AMP + diphosphate. It carries out the reaction (9Z,12Z)-octadecadienoate + ATP + CoA = (9Z,12Z)-octadecadienoyl-CoA + AMP + diphosphate. It catalyses the reaction tetracosanoate + ATP + CoA = tetracosanoyl-CoA + AMP + diphosphate. In terms of biological role, catalyzes the conversion of fatty acids such as long chain and very long-chain fatty acids to their active form acyl-CoAs for both synthesis of cellular lipids, and degradation via beta-oxidation. Can activate diverse saturated, monosaturated and polyunsaturated fatty acids. Has increased ability to activate oleic and linoleic acid. May play a role in spermatogenesis. The sequence is that of Long-chain-fatty-acid--CoA ligase ACSBG2 from Mus musculus (Mouse).